Reading from the N-terminus, the 358-residue chain is DnaJ homolog subfamily B member 11 (358 aa).

An N-terminal signal peptide occupies residues 1–22 (MAPQNLSTFCLLLLYLIGTVIA). The 66-residue stretch at 25-90 (DFYKILGVPR…EKRKQYDTYG (66 aa)) folds into the J domain. Thr188 carries the post-translational modification Phosphothreonine. Asn261 is a glycosylation site (N-linked (GlcNAc...) asparagine).

In terms of assembly, part of a large chaperone multiprotein complex comprising DNAJB11, HSP90B1, HSPA5, HYOU, PDIA2, PDIA4, PDIA6, PPIB, SDF2L1, UGGT1 and very small amounts of ERP29, but not, or at very low levels, CALR nor CANX. Binds to denatured substrates in an ATP-independent manner. Interacts via the J domain with HSPA5 in an ATP-dependent manner. Contains high-mannose Endo H-sensitive carbohydrates. In terms of processing, cys-169, Cys-171, Cys-193 and Cys-196 form intramolecular disulfide bonds. The preferential partner for each Cys is not known.

The protein localises to the endoplasmic reticulum lumen. Functionally, as a co-chaperone for HSPA5 it is required for proper folding, trafficking or degradation of proteins. Binds directly to both unfolded proteins that are substrates for ERAD and nascent unfolded peptide chains, but dissociates from the HSPA5-unfolded protein complex before folding is completed. May help recruiting HSPA5 and other chaperones to the substrate. Stimulates HSPA5 ATPase activity. It is necessary for maturation and correct trafficking of PKD1. The chain is DnaJ homolog subfamily B member 11 (Dnajb11) from Mus musculus (Mouse).